The sequence spans 246 residues: MKKPPVPLFQNGVRADGRAPDQMREVNITVGIVSNADGSAMVSYGATTAVAAVYGPREMHPRHLSLPDRGVMRVRYHMAPFSTKDERKSPTPTRREIEISKILREALEPAVVLEQYPRSRIDVFIEILQADGSTRVASLTAASLALADAGVYMRDLVIGVSVGLVDGAVVLDLNGLEDQYGEGDLPVGYMPNLKRFTLLQLDGAWTRDKFLEALNLAIKGAEFVYQKARDALKSKYMTIAEDIYGR.

Belongs to the RNase PH family. Rrp41 subfamily. As to quaternary structure, component of the archaeal exosome complex. Forms a hexameric ring-like arrangement composed of 3 Rrp41-Rrp42 heterodimers. The hexameric ring associates with a trimer of Rrp4 and/or Csl4 subunits.

The protein resides in the cytoplasm. Its function is as follows. Catalytic component of the exosome, which is a complex involved in RNA degradation. Has 3'-&gt;5' exoribonuclease activity. Can also synthesize heteromeric RNA-tails. This chain is Exosome complex component Rrp41, found in Pyrobaculum islandicum (strain DSM 4184 / JCM 9189 / GEO3).